The chain runs to 391 residues: Coproporphyrin III ferrochelatase (391 aa).

Residues Ser-79 and Tyr-148 each contribute to the Fe-coproporphyrin III site. Fe(2+)-binding residues include His-211 and Glu-305.

The protein belongs to the ferrochelatase family.

It is found in the cytoplasm. It catalyses the reaction Fe-coproporphyrin III + 2 H(+) = coproporphyrin III + Fe(2+). It functions in the pathway porphyrin-containing compound metabolism; protoheme biosynthesis. Involved in coproporphyrin-dependent heme b biosynthesis. Catalyzes the insertion of ferrous iron into coproporphyrin III to form Fe-coproporphyrin III. This Tropheryma whipplei (strain TW08/27) (Whipple's bacillus) protein is Coproporphyrin III ferrochelatase.